The primary structure comprises 204 residues: LexA repressor (204 aa).

The segment at residues 29–49 (RAEIADIMGFQSKNAASDHLR) is a DNA-binding region (H-T-H motif). Residues Ser-123 and Lys-160 each act as for autocatalytic cleavage activity in the active site.

The protein belongs to the peptidase S24 family. As to quaternary structure, homodimer.

It carries out the reaction Hydrolysis of Ala-|-Gly bond in repressor LexA.. Its function is as follows. Represses a number of genes involved in the response to DNA damage (SOS response), including recA and lexA. In the presence of single-stranded DNA, RecA interacts with LexA causing an autocatalytic cleavage which disrupts the DNA-binding part of LexA, leading to derepression of the SOS regulon and eventually DNA repair. The polypeptide is LexA repressor (Alcanivorax borkumensis (strain ATCC 700651 / DSM 11573 / NCIMB 13689 / SK2)).